A 140-amino-acid polypeptide reads, in one-letter code: Organic hydroperoxide resistance protein-like (140 aa).

The protein belongs to the OsmC/Ohr family.

This is Organic hydroperoxide resistance protein-like from Mycoplasma genitalium (strain ATCC 33530 / DSM 19775 / NCTC 10195 / G37) (Mycoplasmoides genitalium).